Reading from the N-terminus, the 937-residue chain is MLLYRGAPAGPGAPGCGLARPGGGPQAFGIRLSTMSPRYLQSNSSSHTRPFSAIAELLDNAVDPDVSARTVFIDVEEVKNKSCLTFTDDGCGMTPHKLHRMLSFGFTDKVIKKSQCPIGVFGNGFKSGSMRLGKDALVFTKNGGTLTVGLLSQTYLECVQAQAVIVPIVPFNQQNKKMIITEDSLPSLEAILNYSIFNRENDLLAQFDAIPGKKGTRVLIWNIRRNKNGKSELDFDTDQYDILVSDFDTEEKMTGGVTSELPETEYSLRAFCGILYMKPRMKIFLRQKKVTTQMIAKSLANVEYDTYKPTFTNKQVRITFGFSCKNSNQFGIMMYHNNRLIKSFEKVGCQVKPTRGEGVGVIGVIECNFLKPAYNKQDFEYTKEYRLTINALAQKLNAYWKEKTSQDNFETSTVARPIPKVPDQTWVQCDECLKWRKLPGKIDPSMLPARWFCYYNSHPKYRRCSVPEEQELTDEDLCLSKAKKQEQTVEEKKKMPMENENHQVFSNPPKILTVQEMAGLNNKTIGYEGIHSPSVLPSGGEESRSPSLQLKPLDSSVLQFSSKYKWILGEEPVEKRRRLQNEMTTPSLDYSMPAPYRRVEAPVAYPEGENSHDKSSSERSTPPYLFPEYPEASKNTGQNREVSILYPGAKDQRQGSLLPEELEDQMPRLVAEESNRGSTTINKEEVNKGPFVAVVGVAKGVRDSGAPIQLIPFNREELAERRKAVESWNPVPYSVASAAIPAAAIGEKARGYEESEGHNTPKLKNQRELEELKRTTEKLERVLAERNLFQQKVEELEQERNHWQSEFKKVQHELVIYSTQEAEGLYWSKKHMGYRQAEFQILKAELERTKEEKQELKEKLKETETHLEMLQKAQVSYRTPEGDDLERALAKLTRLRIHVSYLLTSVLPHLELREIGYDSEQVDGILYTVLEANHILD.

The CW-type zinc finger occupies 420-472; sequence KVPDQTWVQCDECLKWRKLPGKIDPSMLPARWFCYYNSHPKYRRCSVPEEQEL. The Zn(2+) site is built by cysteine 429, cysteine 432, cysteine 453, and cysteine 464. A disordered region spans residues 606–637; sequence PEGENSHDKSSSERSTPPYLFPEYPEASKNTG. Residues 762 to 876 adopt a coiled-coil conformation; the sequence is KLKNQRELEE…LEMLQKAQVS (115 aa).

Expressed at low levels in normal tissues, with highest expression levels in placenta and testis. Expression is significantly increased in subset of diffuse large B-cell lymphomas.

It is found in the nucleus. Functionally, histone methylation reader which binds to non-methylated (H3K4me0), monomethylated (H3K4me1), dimethylated (H3K4me2) and trimethylated (H3K4me3) 'Lys-4' on histone H3. The order of binding preference is H3K4me3 &gt; H3K4me2 &gt; H3K4me1 &gt; H3K4me0. This chain is MORC family CW-type zinc finger protein 4 (MORC4), found in Homo sapiens (Human).